Here is a 483-residue protein sequence, read N- to C-terminus: UDP-N-acetylmuramoyl-L-alanyl-D-glutamate--2,6-diaminopimelate ligase (483 aa).

S29 contributes to the UDP-N-acetyl-alpha-D-muramoyl-L-alanyl-D-glutamate binding site. An ATP-binding site is contributed by 107–113; the sequence is GTSGKTS. Residues 149–150, S176, Q182, and R184 contribute to the UDP-N-acetyl-alpha-D-muramoyl-L-alanyl-D-glutamate site; that span reads TT. K216 bears the N6-carboxylysine mark. Meso-2,6-diaminopimelate is bound by residues R380, 404–407, G452, and E456; that span reads DNPR. Positions 404–407 match the Meso-diaminopimelate recognition motif motif; it reads DNPR.

It belongs to the MurCDEF family. MurE subfamily. Mg(2+) is required as a cofactor. Carboxylation is probably crucial for Mg(2+) binding and, consequently, for the gamma-phosphate positioning of ATP.

It localises to the cytoplasm. It catalyses the reaction UDP-N-acetyl-alpha-D-muramoyl-L-alanyl-D-glutamate + meso-2,6-diaminopimelate + ATP = UDP-N-acetyl-alpha-D-muramoyl-L-alanyl-gamma-D-glutamyl-meso-2,6-diaminopimelate + ADP + phosphate + H(+). It participates in cell wall biogenesis; peptidoglycan biosynthesis. In terms of biological role, catalyzes the addition of meso-diaminopimelic acid to the nucleotide precursor UDP-N-acetylmuramoyl-L-alanyl-D-glutamate (UMAG) in the biosynthesis of bacterial cell-wall peptidoglycan. The sequence is that of UDP-N-acetylmuramoyl-L-alanyl-D-glutamate--2,6-diaminopimelate ligase from Chelativorans sp. (strain BNC1).